A 75-amino-acid polypeptide reads, in one-letter code: UPF0270 protein Avin_35000 (75 aa).

This sequence belongs to the UPF0270 family.

The sequence is that of UPF0270 protein Avin_35000 from Azotobacter vinelandii (strain DJ / ATCC BAA-1303).